A 502-amino-acid polypeptide reads, in one-letter code: 2-isopropylmalate synthase (502 aa).

Residues D1, H189, H191, and N225 each contribute to the Mn(2+) site. Residues 1–254 (DGEQALQASL…STNINHKEIY (254 aa)) enclose the Pyruvate carboxyltransferase domain. The interval 379 to 502 (CLKFFSVQSI…VNKNLKNLKK (124 aa)) is regulatory domain.

The protein belongs to the alpha-IPM synthase/homocitrate synthase family. LeuA type 1 subfamily. As to quaternary structure, homodimer. Requires Mn(2+) as cofactor.

Its subcellular location is the cytoplasm. It catalyses the reaction 3-methyl-2-oxobutanoate + acetyl-CoA + H2O = (2S)-2-isopropylmalate + CoA + H(+). Its pathway is amino-acid biosynthesis; L-leucine biosynthesis; L-leucine from 3-methyl-2-oxobutanoate: step 1/4. Catalyzes the condensation of the acetyl group of acetyl-CoA with 3-methyl-2-oxobutanoate (2-ketoisovalerate) to form 3-carboxy-3-hydroxy-4-methylpentanoate (2-isopropylmalate). This Buchnera aphidicola subsp. Uroleucon sonchi protein is 2-isopropylmalate synthase.